A 66-amino-acid chain; its full sequence is Large ribosomal subunit protein bL35 (66 aa).

It belongs to the bacterial ribosomal protein bL35 family.

The chain is Large ribosomal subunit protein bL35 from Wigglesworthia glossinidia brevipalpis.